The primary structure comprises 569 residues: Proline--tRNA ligase (569 aa).

The protein belongs to the class-II aminoacyl-tRNA synthetase family. ProS type 1 subfamily. As to quaternary structure, homodimer.

It localises to the cytoplasm. It catalyses the reaction tRNA(Pro) + L-proline + ATP = L-prolyl-tRNA(Pro) + AMP + diphosphate. In terms of biological role, catalyzes the attachment of proline to tRNA(Pro) in a two-step reaction: proline is first activated by ATP to form Pro-AMP and then transferred to the acceptor end of tRNA(Pro). As ProRS can inadvertently accommodate and process non-cognate amino acids such as alanine and cysteine, to avoid such errors it has two additional distinct editing activities against alanine. One activity is designated as 'pretransfer' editing and involves the tRNA(Pro)-independent hydrolysis of activated Ala-AMP. The other activity is designated 'posttransfer' editing and involves deacylation of mischarged Ala-tRNA(Pro). The misacylated Cys-tRNA(Pro) is not edited by ProRS. The protein is Proline--tRNA ligase of Legionella pneumophila (strain Paris).